The sequence spans 389 residues: Diaminopimelate decarboxylase (389 aa).

The residue at position 58 (lysine 58) is an N6-(pyridoxal phosphate)lysine. Pyridoxal 5'-phosphate contacts are provided by residues glycine 233 and 271-274 (ELGR). Positions 274, 310, 314, 342, and 370 each coordinate substrate. Tyrosine 370 lines the pyridoxal 5'-phosphate pocket.

Belongs to the Orn/Lys/Arg decarboxylase class-II family. LysA subfamily. In terms of assembly, homodimer. It depends on pyridoxal 5'-phosphate as a cofactor.

The enzyme catalyses meso-2,6-diaminopimelate + H(+) = L-lysine + CO2. It functions in the pathway amino-acid biosynthesis; L-lysine biosynthesis via DAP pathway; L-lysine from DL-2,6-diaminopimelate: step 1/1. In terms of biological role, specifically catalyzes the decarboxylation of meso-diaminopimelate (meso-DAP) to L-lysine. This is Diaminopimelate decarboxylase from Francisella tularensis subsp. holarctica (strain LVS).